The primary structure comprises 343 residues: Dehydrodolichyl diphosphate synthase complex subunit SRT1 (343 aa).

The protein belongs to the UPP synthase family. As to quaternary structure, forms an active dehydrodolichyl diphosphate synthase complex with NUS1. It depends on Mg(2+) as a cofactor.

The protein resides in the lipid droplet. The catalysed reaction is n isopentenyl diphosphate + (2E,6E)-farnesyl diphosphate = a di-trans,poly-cis-polyprenyl diphosphate + n diphosphate. It participates in protein modification; protein glycosylation. Its function is as follows. With NUS1, forms the dehydrodolichyl diphosphate synthase (DDS) complex, an essential component of the dolichol monophosphate (Dol-P) biosynthetic machinery. Adds multiple copies of isopentenyl pyrophosphate (IPP) to farnesyl pyrophosphate (FPP) to produce dehydrodolichyl diphosphate (Dedol-PP), a precursor of dolichol which is utilized as a sugar carrier in protein glycosylation in the endoplasmic reticulum (ER). The polypeptide is Dehydrodolichyl diphosphate synthase complex subunit SRT1 (Saccharomyces cerevisiae (strain ATCC 204508 / S288c) (Baker's yeast)).